We begin with the raw amino-acid sequence, 282 residues long: 40S small subunit processome assembly factor 1 (282 aa).

Disordered regions lie at residues 27–98 (YDLG…SEVP) and 121–143 (FHSRSEKRKPKSEEDKPAKNKTK). Residues 48-59 (KRDSETVADRAA) are compositionally biased toward basic and acidic residues. Ser67 and Ser75 each carry phosphoserine. Residues 89 to 98 (SAPAAPSEVP) are compositionally biased toward low complexity. Residues 131–143 (KSEEDKPAKNKTK) show a composition bias toward basic and acidic residues. The residue at position 173 (Lys173) is an N6-acetyllysine. Over residues 208 to 226 (EKRTSMEEEKRAAQETDIF) the composition is skewed to basic and acidic residues. A disordered region spans residues 208 to 254 (EKRTSMEEEKRAAQETDIFKRKKRKGRSQEDRRSKKLAPSILSSGRA). Ser268 is subject to Phosphoserine.

As to quaternary structure, part of the small subunit (SSU) processome, composed of more than 70 proteins and the RNA chaperone small nucleolar RNA (snoRNA) U3.

The protein resides in the chromosome. Its subcellular location is the nucleus. It localises to the nucleolus. In terms of biological role, part of the small subunit (SSU) processome, first precursor of the small eukaryotic ribosomal subunit. During the assembly of the SSU processome in the nucleolus, many ribosome biogenesis factors, an RNA chaperone and ribosomal proteins associate with the nascent pre-rRNA and work in concert to generate RNA folding, modifications, rearrangements and cleavage as well as targeted degradation of pre-ribosomal RNA by the RNA exosome. Prevents helicase DHX37 to be recruited before post-A1 state. The chain is 40S small subunit processome assembly factor 1 from Rattus norvegicus (Rat).